Consider the following 119-residue polypeptide: Large ribosomal subunit protein bL20 (119 aa).

It belongs to the bacterial ribosomal protein bL20 family.

Its function is as follows. Binds directly to 23S ribosomal RNA and is necessary for the in vitro assembly process of the 50S ribosomal subunit. It is not involved in the protein synthesizing functions of that subunit. This chain is Large ribosomal subunit protein bL20, found in Geobacillus kaustophilus (strain HTA426).